Here is a 458-residue protein sequence, read N- to C-terminus: UPF0210 protein MmarC6_1246 (458 aa).

The protein belongs to the UPF0210 family.

The protein is UPF0210 protein MmarC6_1246 of Methanococcus maripaludis (strain C6 / ATCC BAA-1332).